We begin with the raw amino-acid sequence, 487 residues long: GTPase Der (487 aa).

EngA-type G domains lie at 3–167 and 203–378; these read LTLA…DEME and LQVA…EVWN. GTP-binding positions include 9–16, 56–60, and 119–122; these read GRPNVGKS, DTAGL, and NKAE. Acidic residues predominate over residues 167-190; that stretch reads EQQAEEQAPETDVDLDPEDEDGEE. The tract at residues 167–191 is disordered; that stretch reads EQQAEEQAPETDVDLDPEDEDGEEV. Residues 209-216, 256-260, and 321-324 contribute to the GTP site; these read GRPNAGKS, DTAGM, and NKWD. The region spanning 379–465 is the KH-like domain; that stretch reads RRIPTAALNR…RLTLRGQGDK (87 aa). The disordered stretch occupies residues 458–487; that stretch reads TLRGQGDKNPYKGRRKKNAGALAKHLKSRG. Over residues 468–487 the composition is skewed to basic residues; sequence YKGRRKKNAGALAKHLKSRG.

Belongs to the TRAFAC class TrmE-Era-EngA-EngB-Septin-like GTPase superfamily. EngA (Der) GTPase family. As to quaternary structure, associates with the 50S ribosomal subunit.

GTPase that plays an essential role in the late steps of ribosome biogenesis. In Ruegeria pomeroyi (strain ATCC 700808 / DSM 15171 / DSS-3) (Silicibacter pomeroyi), this protein is GTPase Der.